The primary structure comprises 212 residues: Uracil phosphoribosyltransferase (212 aa).

5-phospho-alpha-D-ribose 1-diphosphate contacts are provided by residues Arg-78, Arg-103, and 130-138; that span reads DPMLATGGS. Residues Ile-193 and 198-200 each bind uracil; that span reads GDA. Asp-199 contributes to the 5-phospho-alpha-D-ribose 1-diphosphate binding site.

This sequence belongs to the UPRTase family. Mg(2+) is required as a cofactor.

It catalyses the reaction UMP + diphosphate = 5-phospho-alpha-D-ribose 1-diphosphate + uracil. Its pathway is pyrimidine metabolism; UMP biosynthesis via salvage pathway; UMP from uracil: step 1/1. Its activity is regulated as follows. Allosterically activated by GTP. Its function is as follows. Catalyzes the conversion of uracil and 5-phospho-alpha-D-ribose 1-diphosphate (PRPP) to UMP and diphosphate. This Bordetella avium (strain 197N) protein is Uracil phosphoribosyltransferase.